The primary structure comprises 2055 residues: Multiple PDZ domain protein (2055 aa).

The region spanning methionine 1–asparagine 63 is the L27 domain. One can recognise a PDZ 1 domain in the interval isoleucine 138–serine 225. Serine 231 is modified (phosphoserine). One can recognise a PDZ 2 domain in the interval threonine 258–alanine 338. Residues leucine 348–serine 360 are compositionally biased toward low complexity. Positions leucine 348–aspartate 372 are disordered. 3 consecutive PDZ domains span residues aspartate 378–glycine 464, valine 546–threonine 627, and serine 693–proline 779. 2 positions are modified to phosphoserine: serine 783 and serine 1066. The PDZ 6 domain maps to threonine 996 to valine 1077. The disordered stretch occupies residues proline 1111–alanine 1130. The 93-residue stretch at arginine 1139 to isoleucine 1231 folds into the PDZ 7 domain. Arginine 1158 is subject to Omega-N-methylarginine. Residues leucine 1264–glutamate 1274 show a composition bias toward polar residues. Positions leucine 1264 to aspartate 1299 are disordered. Positions valine 1338–alanine 1421 constitute a PDZ 8 domain. Residues alanine 1435–proline 1445 are compositionally biased toward low complexity. Residues alanine 1435 to serine 1459 form a disordered region. The 82-residue stretch at glutamine 1471 to asparagine 1552 folds into the PDZ 9 domain. Positions alanine 1557–valine 1597 are disordered. PDZ domains follow at residues threonine 1614–glutamate 1697 and threonine 1710–lysine 1792. A disordered region spans residues proline 1795–lysine 1834. Phosphoserine occurs at positions 1803 and 1809. The segment covering serine 1803–serine 1815 has biased composition (low complexity). The span at phenylalanine 1816–lysine 1834 shows a compositional bias: polar residues. 2 consecutive PDZ domains span residues threonine 1847–glycine 1933 and threonine 1972–serine 2055.

In terms of assembly, interacts with CLDN5, DLG4, GRIN1, SYNGAP1, CAMK2A and CAMK2B, HTR2A, HTR2B, HTR2C, PLEKHA1/TAPP1 and PLEKHA2/TAPP2. Interacts with F11R/JAM, CLDN1, NG2, CXADR, CRB1, MPP4 and PALS1. Interacts with FAT4 (via cytoplasmic domain). Interacts with DLL1. In terms of tissue distribution, in the brain, it is strongly expressed in the choroid plexus. Within the hippocampal formation, strongest expression was seen in the soma of CA1-4 pyramidal cells. Expressed in most neocortical regions with the strongest expression in piriform cortex and amygdaloid nuclei but also detected in the subiculum and olfactory bulb. In the cerebellum, the highest level of expression was found in Purkinje cells. Moderately expressed in the granular layer and molecular layer. Expressed in the pontine nuclei, parts of spinal trigeminal nuclei, and the principal sensory trigeminal nuclei of the metencephalon. Expressed in all thalamic and hypothalamic nuclei, and the substantia nigra (at protein level). Ubiquitously expressed.

It localises to the cell membrane. The protein localises to the apical cell membrane. Its subcellular location is the postsynaptic density. The protein resides in the cell projection. It is found in the dendrite. It localises to the cell junction. The protein localises to the tight junction. Its subcellular location is the synapse. The protein resides in the synaptosome. Its function is as follows. Member of the NMDAR signaling complex that may play a role in control of AMPAR potentiation and synaptic plasticity in excitatory synapses. Promotes clustering of HT2RC at the cell surface. The polypeptide is Multiple PDZ domain protein (Mpdz) (Mus musculus (Mouse)).